We begin with the raw amino-acid sequence, 102 residues long: Large ribosomal subunit protein eL21 (102 aa).

Positions 1–21 are enriched in basic residues; the sequence is MVRRSKGFRSRTRKKLRKKPR. The interval 1 to 33 is disordered; that stretch reads MVRRSKGFRSRTRKKLRKKPRERGLSPLGPMTQ.

This sequence belongs to the eukaryotic ribosomal protein eL21 family.

This Methanopyrus kandleri (strain AV19 / DSM 6324 / JCM 9639 / NBRC 100938) protein is Large ribosomal subunit protein eL21.